The following is a 683-amino-acid chain: Synaptic vesicle glycoprotein 2B (683 aa).

The interval 1–42 (MDDYKYQDNYGGYAPSDGYYRGNESNPEEDAQSDVTEGHDEE) is disordered. Residues 1 to 108 (MDDYKYQDNY…MDECGHGRFQ (108 aa)) are Cytoplasmic-facing. The residue at position 33 (S33) is a Phosphoserine. T36 bears the Phosphothreonine mark. Residues 109–129 (WILFFVLGLALMADGVEVFVV) form a helical membrane-spanning segment. The Extracellular portion of the chain corresponds to 130–148 (SFALPSAEKDMCLSSSKKG). The chain crosses the membrane as a helical span at residues 149–169 (MLGMIVYLGMMAGAFILGGLA). The Cytoplasmic portion of the chain corresponds to 170–182 (DKLGRKRVLSMSL). The helical transmembrane segment at 183–203 (AVNASFASLSSFVQGYGAFLF) threads the bilayer. Topologically, residues 204 to 205 (CR) are extracellular. A helical transmembrane segment spans residues 206–226 (LISGIGIGGALPIVFAYFSEF). Residues 227–237 (LSREKRGEHLS) lie on the Cytoplasmic side of the membrane. A helical membrane pass occupies residues 238–258 (WLGIFWMTGGLYASAMAWSII). The Extracellular segment spans residues 259–277 (PHYGWGFSMGTNYHFHSWR). The helical transmembrane segment at 278-298 (VFVIVCALPCTVSMVALKFMP) threads the bilayer. At 299-390 (ESPRFLLEMG…CVMGPYRMNT (92 aa)) the chain is on the cytoplasmic side. A helical membrane pass occupies residues 391–411 (LILAVVWFAMAFSYYGLTVWF). The Extracellular segment spans residues 412–535 (PDMIRYFQDE…CHMDLEQDND (124 aa)). Y423 carries the post-translational modification Phosphotyrosine. N-linked (GlcNAc...) asparagine glycans are attached at residues N441, N491, and N516. The helical transmembrane segment at 536-556 (FLIYLVSFLGSLSVLPGNIIS) threads the bilayer. The Cytoplasmic segment spans residues 557–565 (ALLMDRIGR). A helical membrane pass occupies residues 566–586 (LKMIGGSMLISAVCCFFLFFG). At 587 to 592 (NSESAM) the chain is on the extracellular side. The chain crosses the membrane as a helical span at residues 593–613 (IGWQCLFCGTSIAAWNALDVI). The Cytoplasmic portion of the chain corresponds to 614 to 626 (TVELYPTNQRATA). A helical membrane pass occupies residues 627-649 (FGILNGLCKFGAILGNTIFASFV). Topologically, residues 650–653 (GITK) are extracellular. The helical transmembrane segment at 654–672 (VVPILLAAASLVGGGLIAL) threads the bilayer. At 673–683 (RLPETREQVLM) the chain is on the cytoplasmic side.

This sequence belongs to the major facilitator superfamily. As to quaternary structure, interacts with SYT1 in a calcium-independent manner. Forms a complex with SYT1, syntaxin-1 and SNAP25. In terms of assembly, (Microbial infection) Interacts with C.botulinum neurotoxin type A2 (BoNT/A, botA). Interaction is improved by glycosylation of SV2. Post-translationally, N-glycosylated. In terms of processing, the N-terminal cytoplasmic domain is phosphorylated by CK1.

The protein localises to the cytoplasmic vesicle. It is found in the secretory vesicle. Its subcellular location is the synaptic vesicle membrane. It localises to the acrosome. Functionally, probably plays a role in the control of regulated secretion in neural and endocrine cells. In terms of biological role, (Microbial infection) Receptor for the C.botulinum neurotoxin type A2 (BoNT/A, botA); glycosylation is not essential but enhances the interaction. Probably also serves as a receptor for the closely related C.botulinum neurotoxin type A1. This chain is Synaptic vesicle glycoprotein 2B (SV2B), found in Homo sapiens (Human).